The following is a 143-amino-acid chain: Ribonuclease HI (143 aa).

Positions 1 to 136 constitute an RNase H type-1 domain; it reads MQEIEIFCDG…CNSLAKLEAQ (136 aa). Positions 9, 47, 69, and 128 each coordinate Mg(2+).

The protein belongs to the RNase H family. Monomer. It depends on Mg(2+) as a cofactor.

The protein resides in the cytoplasm. The catalysed reaction is Endonucleolytic cleavage to 5'-phosphomonoester.. Its function is as follows. Endonuclease that specifically degrades the RNA of RNA-DNA hybrids. The polypeptide is Ribonuclease HI (rnhA) (Helicobacter pylori (strain J99 / ATCC 700824) (Campylobacter pylori J99)).